The chain runs to 595 residues: Elongation factor 4 (595 aa).

In terms of domain architecture, tr-type G spans K2 to A183. Residues D14–T19 and N130–D133 contribute to the GTP site.

It belongs to the TRAFAC class translation factor GTPase superfamily. Classic translation factor GTPase family. LepA subfamily.

The protein resides in the cell inner membrane. It catalyses the reaction GTP + H2O = GDP + phosphate + H(+). In terms of biological role, required for accurate and efficient protein synthesis under certain stress conditions. May act as a fidelity factor of the translation reaction, by catalyzing a one-codon backward translocation of tRNAs on improperly translocated ribosomes. Back-translocation proceeds from a post-translocation (POST) complex to a pre-translocation (PRE) complex, thus giving elongation factor G a second chance to translocate the tRNAs correctly. Binds to ribosomes in a GTP-dependent manner. This chain is Elongation factor 4, found in Porphyromonas gingivalis (strain ATCC BAA-308 / W83).